Reading from the N-terminus, the 557-residue chain is DNA ligase (557 aa).

An ATP-binding site is contributed by Glu-249. Residue Lys-251 is the N6-AMP-lysine intermediate of the active site. The ATP site is built by Arg-256, Arg-271, Glu-301, Phe-340, Arg-417, and Lys-423.

This sequence belongs to the ATP-dependent DNA ligase family. Mg(2+) serves as cofactor.

The enzyme catalyses ATP + (deoxyribonucleotide)n-3'-hydroxyl + 5'-phospho-(deoxyribonucleotide)m = (deoxyribonucleotide)n+m + AMP + diphosphate.. Its function is as follows. DNA ligase that seals nicks in double-stranded DNA during DNA replication, DNA recombination and DNA repair. This is DNA ligase from Methanothermobacter thermautotrophicus (Methanobacterium thermoformicicum).